Here is a 277-residue protein sequence, read N- to C-terminus: Diaminopimelate epimerase (277 aa).

Substrate is bound by residues Asn13, Gln46, and Asn66. Catalysis depends on Cys75, which acts as the Proton donor. Residues 76 to 77, Asn160, Asn193, and 211 to 212 each bind substrate; these read GN and ER. Residue Cys220 is the Proton acceptor of the active site. Substrate is bound at residue 221 to 222; it reads GS.

This sequence belongs to the diaminopimelate epimerase family. Homodimer.

Its subcellular location is the cytoplasm. It carries out the reaction (2S,6S)-2,6-diaminopimelate = meso-2,6-diaminopimelate. Its pathway is amino-acid biosynthesis; L-lysine biosynthesis via DAP pathway; DL-2,6-diaminopimelate from LL-2,6-diaminopimelate: step 1/1. Functionally, catalyzes the stereoinversion of LL-2,6-diaminopimelate (L,L-DAP) to meso-diaminopimelate (meso-DAP), a precursor of L-lysine and an essential component of the bacterial peptidoglycan. The protein is Diaminopimelate epimerase of Legionella pneumophila subsp. pneumophila (strain Philadelphia 1 / ATCC 33152 / DSM 7513).